The sequence spans 555 residues: Probable beta-glucosidase btgE (555 aa).

Positions 1-18 (MRGAILATAAAFAGTAVA) are cleaved as a signal peptide. 2 disordered regions span residues 92-114 (TSSA…VTLP) and 263-290 (TTSA…PTGA). Residues 263–288 (TTSAASTTTAVPSSSTTTSSATSVPT) are compositionally biased toward low complexity. The Proton donor role is filled by Glu392. Residue Glu488 is the Nucleophile of the active site.

This sequence belongs to the glycosyl hydrolase 17 family.

Its subcellular location is the secreted. The protein resides in the cell wall. It carries out the reaction Hydrolysis of terminal, non-reducing beta-D-glucosyl residues with release of beta-D-glucose.. It functions in the pathway glycan metabolism; cellulose degradation. Beta-glucosidases are one of a number of cellulolytic enzymes involved in the degradation of cellulosic biomass. Catalyzes the last step releasing glucose from the inhibitory cellobiose. This chain is Probable beta-glucosidase btgE (btgE), found in Emericella nidulans (strain FGSC A4 / ATCC 38163 / CBS 112.46 / NRRL 194 / M139) (Aspergillus nidulans).